A 506-amino-acid polypeptide reads, in one-letter code: Lysine--tRNA ligase (506 aa).

2 residues coordinate Mg(2+): glutamate 416 and glutamate 423.

The protein belongs to the class-II aminoacyl-tRNA synthetase family. In terms of assembly, homodimer. Requires Mg(2+) as cofactor.

The protein resides in the cytoplasm. The catalysed reaction is tRNA(Lys) + L-lysine + ATP = L-lysyl-tRNA(Lys) + AMP + diphosphate. The protein is Lysine--tRNA ligase of Baumannia cicadellinicola subsp. Homalodisca coagulata.